Here is a 104-residue protein sequence, read N- to C-terminus: Thioredoxin 1 (104 aa).

The Thioredoxin domain maps to 2-104 (VKIVTSQAEF…LKQLIEKYAA (103 aa)). Catalysis depends on nucleophile residues cysteine 30 and cysteine 33. Cysteine 30 and cysteine 33 are joined by a disulfide.

Belongs to the thioredoxin family. Post-translationally, the disulfide bond between Cys-30 and Cys-33 acts as a redox-active center and is reduced by thioredoxin reductase TRXR.

It is found in the cytoplasm. In terms of biological role, participates in various redox reactions through the reversible oxidation of its active center dithiol to a disulfide and catalyzes dithiol-disulfide exchange reactions. By modifying the redox status of targeted proteins, induces changes in their structure and activity. Reduces oxidized glutathione (GSSG), thereby acting as a backup for the glutathione redox system. Reduces nitroglutathione (GSNO), a compound involved in the transport of nitric oxide (NO). Also reduces oxidative stress by detoxifying hydrogen peroxide, tert-butyl hydroperoxide and cumene hydroperoxide. Activates ornithine aminotransferase OAT by reducing a disulfide bond in the substrate binding loop, thereby enhancing the affinity of OAT for its substrates. May reduce S-adenosyl-L-homocysteine hydrolase SAHH. The polypeptide is Thioredoxin 1 (Plasmodium falciparum (isolate 3D7)).